A 452-amino-acid polypeptide reads, in one-letter code: Chaperone SurA (452 aa).

An N-terminal signal peptide occupies residues 1–28 (MKKTLRFAAVVSSLAAASALLAAAPAAA). 2 consecutive PpiC domains span residues 186–288 (QQDL…RLVD) and 302–400 (IVQT…QVLS).

The protein localises to the periplasm. It catalyses the reaction [protein]-peptidylproline (omega=180) = [protein]-peptidylproline (omega=0). In terms of biological role, chaperone involved in the correct folding and assembly of outer membrane proteins. Recognizes specific patterns of aromatic residues and the orientation of their side chains, which are found more frequently in integral outer membrane proteins. May act in both early periplasmic and late outer membrane-associated steps of protein maturation. This chain is Chaperone SurA, found in Burkholderia lata (strain ATCC 17760 / DSM 23089 / LMG 22485 / NCIMB 9086 / R18194 / 383).